The sequence spans 319 residues: Non-homologous end joining protein Ku (319 aa).

The Ku domain maps to 10–188; sequence ISFGLVTVPI…PQGIELSEDE (179 aa). Residues 252-319 form a disordered region; sequence QSVAKAKASR…TTPKKPRRSA (68 aa). Residues 260–274 show a composition bias toward basic and acidic residues; sequence SRGESGEADVHELPR. Basic residues predominate over residues 305 to 319; sequence TAAKKTTPKKPRRSA.

It belongs to the prokaryotic Ku family. As to quaternary structure, homodimer. Interacts with LigD.

Its function is as follows. With LigD forms a non-homologous end joining (NHEJ) DNA repair enzyme, which repairs dsDNA breaks with reduced fidelity. Binds linear dsDNA with 5'- and 3'- overhangs but not closed circular dsDNA nor ssDNA. Recruits and stimulates the ligase activity of LigD. This is Non-homologous end joining protein Ku from Streptomyces avermitilis (strain ATCC 31267 / DSM 46492 / JCM 5070 / NBRC 14893 / NCIMB 12804 / NRRL 8165 / MA-4680).